The sequence spans 750 residues: Tyrosine-protein phosphatase 2 (750 aa).

The segment at 1 to 20 is disordered; the sequence is MDRIAQQYRNGKRDNNGNRM. Position 258 is a phosphoserine (serine 258). 2 disordered regions span residues 327–348 and 425–450; these read LHQKQLSQKQRGPQSTDDSKLY and VKLPHSPKPPAVSEASTTETKTDKSY. Positions 330-348 are enriched in polar residues; that stretch reads KQLSQKQRGPQSTDDSKLY. One can recognise a Tyrosine-protein phosphatase domain in the interval 383-737; the sequence is SPSPLSSDDT…IACYEALLNY (355 aa). Serine 430 is subject to Phosphoserine. Catalysis depends on cysteine 666, which acts as the Phosphocysteine intermediate.

Belongs to the protein-tyrosine phosphatase family. Non-receptor class subfamily. In terms of assembly, interacts with HOG1.

It is found in the cytoplasm. The protein localises to the nucleus. The enzyme catalyses O-phospho-L-tyrosyl-[protein] + H2O = L-tyrosyl-[protein] + phosphate. Functionally, major phosphatase responsible with PTP3 for tyrosine dephosphorylation of MAP kinase HOG1 to inactivate its activity. May also be involved in the regulation of MAP kinase FUS3. May be implicated in the ubiquitin-mediated protein degradation. This chain is Tyrosine-protein phosphatase 2 (PTP2), found in Saccharomyces cerevisiae (strain ATCC 204508 / S288c) (Baker's yeast).